Consider the following 172-residue polypeptide: Gamma-crystallin-4 (172 aa).

2 Beta/gamma crystallin 'Greek key' domains span residues 1-37 and 38-80; these read IFFY…RVES and GNWI…RFIP. Residues 81 to 85 form a connecting peptide region; it reads HPHSQ. Beta/gamma crystallin 'Greek key' domains follow at residues 86-126 and 127-169; these read YKMR…NVSD and GHWM…RRVH.

The protein belongs to the beta/gamma-crystallin family. In terms of assembly, monomer.

Crystallins are the dominant structural components of the vertebrate eye lens. This chain is Gamma-crystallin-4 (cryg4), found in Xenopus laevis (African clawed frog).